The following is a 111-amino-acid chain: MAMPNFGDMMKQLQEAGAKMQDLQKQLEKLVSEGEAGGGMVRAKVNGRQKLLELTIDPEIMDDVDMVQDLVVAAVNKALEASAQLAQSEIQKAAGGMINPADLMKQFGGQG.

The protein belongs to the YbaB/EbfC family. Homodimer.

It localises to the cytoplasm. The protein localises to the nucleoid. Functionally, binds to DNA and alters its conformation. May be involved in regulation of gene expression, nucleoid organization and DNA protection. This chain is Nucleoid-associated protein CT0805, found in Chlorobaculum tepidum (strain ATCC 49652 / DSM 12025 / NBRC 103806 / TLS) (Chlorobium tepidum).